A 130-amino-acid polypeptide reads, in one-letter code: Gloverin (130 aa).

Hemolymph.

Its subcellular location is the secreted. Antibacterial protein active against Gram-negative bacteria. The chain is Gloverin from Hyalophora cecropia (Cecropia moth).